Consider the following 553-residue polypeptide: Cytokine-like nuclear factor N-PAC (553 aa).

A PWWP domain is found at 8-66 (LGDLVWGKLGRYPPWPGKIVNPPKDLKKPRGKKCFFVKFFGTEDHAWIKVEQLKPYHLH). 2 stretches are compositionally biased toward basic and acidic residues: residues 92 to 145 (KTKG…EGKK) and 162 to 182 (RAQD…KDLT). Residues 92 to 188 (KTKGKDQASS…KDLTIPESST (97 aa)) form a disordered region. A DNA-binding region (a.T hook) is located at residues 168–180 (PRKRGRPPKDEKD). Residues 214 to 217 (DPHF) form an interaction with histone H3 region. Positions 261-553 (GSITPTDKKI…MSAVYRAYIH (293 aa)) are dehydrogenase domain. NAD(+) contacts are provided by residues 271–285 (GFLG…IVSN), T362, and K505.

It belongs to the HIBADH-related family. NP60 subfamily. As to quaternary structure, homotetramere. Binds to mononucleosomes.

It localises to the nucleus. The protein localises to the chromosome. Functionally, cytokine-like nuclear factor with chromatin gene reader activity involved in chromatin modification and regulation of gene expression. Acts as a nucleosome-destabilizing factor that is recruited to genes during transcriptional activation. Recognizes and binds histone H3 without a preference for specific epigenetic markers and also binds DNA. Interacts with KDM1B and promotes its histone demethylase activity by facilitating the capture of H3 tails, they form a multifunctional enzyme complex that modifies transcribed chromatin and facilitates Pol II transcription through nucleosomes. The polypeptide is Cytokine-like nuclear factor N-PAC (GLYR1) (Gallus gallus (Chicken)).